The chain runs to 48 residues: M-oxotoxin-Ot1c (48 aa).

It localises to the secreted. The protein resides in the target cell membrane. Its function is as follows. Disrupts cell membranes, particularly those rich in phosphocholine, through formation of pores. Has antimicrobial activity, hemolytic activity and insecticidal activity. This chain is M-oxotoxin-Ot1c, found in Oxyopes takobius (Lynx spider).